A 632-amino-acid polypeptide reads, in one-letter code: Putative ferric transport system permease protein FbpB 1 (632 aa).

Transmembrane regions (helical) follow at residues 5–25, 37–57, 58–78, 93–113, 144–164, 178–198, 223–243, 270–290, 299–319, 330–350, 377–397, 436–456, 469–489, 490–510, and 547–567; these read SFNLTWAWFLPVIVYGALPLL, LFLTALSVLFMFISATVYKIS, MGYSVIVLLVGYTALATLSLA, LLCIILLIFFFIVYPTLAIFV, LFLSGFVGIVSTVFGLAFALY, IFSILPIVTPPFVVGLGVTLM, GFNGIAIAQILAFAPISFMIL, YQIIFPLLRPALANSFLIVFI, PLVLGGSFDVIATQIYFYIAG, LGSMLLIFSLAIFIIQYIWIG, IIGMLGFWVIFNMALYGSIFY, IYAGIAAPLTAFFGLLIAYIV, FLTMLCFAVPGTVAGVSYILA, FNNAPLYITGTGIIVIISMVM, and CFIVLPLLKPALLSALVTSFV. Residues 140 to 345 form the ABC transmembrane type-1 1 domain; it reads ITNSLFLSGF…IFSLAIFIIQ (206 aa). The region spanning 431-632 is the ABC transmembrane type-1 2 domain; sequence LINTLIYAGI…DCRRYAYFPF (202 aa).

This sequence belongs to the binding-protein-dependent transport system permease family. FbpB subfamily. The complex is composed of two ATP-binding proteins (FbpC), two transmembrane proteins (FbpB) and a solute-binding protein (FbpA).

It localises to the cell inner membrane. Functionally, part of the ABC transporter complex FbpABC (TC 3.A.1.10.1) involved in Fe(3+) ions import. Probably responsible for the translocation of the substrate across the membrane. The sequence is that of Putative ferric transport system permease protein FbpB 1 (fbpB1) from Haemophilus influenzae (strain ATCC 51907 / DSM 11121 / KW20 / Rd).